A 168-amino-acid polypeptide reads, in one-letter code: MSEKEKKDLSQECEELKEKYRELEEYAKRLKAEYENYREEVAREKRELIKNANEYLISRLIPILDDFERALNQKDHEESFYEGVKLIYKKLLNTLEKEGLSKIQVGETFDPFEYEAVERVETDDVEEYTVLEVLESGYKFHGKVLKPAKVKVAVRPRKKDEESPDKKE.

This sequence belongs to the GrpE family. As to quaternary structure, homodimer.

The protein resides in the cytoplasm. Participates actively in the response to hyperosmotic and heat shock by preventing the aggregation of stress-denatured proteins, in association with DnaK and GrpE. It is the nucleotide exchange factor for DnaK and may function as a thermosensor. Unfolded proteins bind initially to DnaJ; upon interaction with the DnaJ-bound protein, DnaK hydrolyzes its bound ATP, resulting in the formation of a stable complex. GrpE releases ADP from DnaK; ATP binding to DnaK triggers the release of the substrate protein, thus completing the reaction cycle. Several rounds of ATP-dependent interactions between DnaJ, DnaK and GrpE are required for fully efficient folding. This Thermotoga neapolitana (strain ATCC 49049 / DSM 4359 / NBRC 107923 / NS-E) protein is Protein GrpE.